Consider the following 189-residue polypeptide: dCTP deaminase, dUMP-forming (189 aa).

DCTP-binding positions include 101–106, Asp-119, 127–129, Gln-148, Tyr-162, and Gln-174; these read KSSLGR and TLE. Glu-129 functions as the Proton donor/acceptor in the catalytic mechanism. The tract at residues 166–189 is disordered; sequence AVGSKYQGQRGPTPSRSHLNFIKS. Over residues 171-189 the composition is skewed to polar residues; the sequence is YQGQRGPTPSRSHLNFIKS.

This sequence belongs to the dCTP deaminase family. As to quaternary structure, homotrimer.

It catalyses the reaction dCTP + 2 H2O = dUMP + NH4(+) + diphosphate. Its pathway is pyrimidine metabolism; dUMP biosynthesis; dUMP from dCTP: step 1/1. Functionally, bifunctional enzyme that catalyzes both the deamination of dCTP to dUTP and the hydrolysis of dUTP to dUMP without releasing the toxic dUTP intermediate. This is dCTP deaminase, dUMP-forming from Mycolicibacterium smegmatis (strain ATCC 700084 / mc(2)155) (Mycobacterium smegmatis).